The chain runs to 678 residues: Probable E3 ubiquitin ligase complex SCF subunit sconB (678 aa).

The tract at residues 1 to 52 (MSTEDNHDSQILTARHRSDASEQSFKSLFGGPSSEDGKETEPDTHDHNHSFS) is disordered. A compositionally biased stretch (basic and acidic residues) spans 35-49 (EDGKETEPDTHDHNH). An F-box domain is found at 178 to 224 (IDFITALPPEIAFKILCYLDTTSLCKASQVSRGWRALADDDVVWHRM). A disordered region spans residues 266–287 (VVGPRSPDASAESPPSGKRKLE). WD repeat units lie at residues 347–375 (GHTNGVMCLQFEDNILATGSYDTTIKIWD), 387–415 (GHESGIRCLQFDDTKLISGSMDRTIKVWN), 427–455 (GHRGGVIGLHFDASILASGSVDKTVKIWN), 466–496 (GHTDWVNAVRVDTSSRTVFSASDDCTVRLWD), 508–543 (GHVGQVQQVVPLPREFEFEEHDAECENDDLSTTSGD), 553–595 (MGLE…RLWE), 607–635 (GHLEGVWALGADTLRIVSGAEDRMIKIWD), and 647–675 (GHSGPVTCIGLGDSRFATGSEDCEVRMYS).

The protein belongs to the WD repeat MET30/SCONB/SCON-2 family. Component of the SCF(sconB) E3 ubiquitin ligase complex.

The protein operates within protein modification; protein ubiquitination. Its function is as follows. Component of the SCF(sconB) E3 ubiquitin ligase complex involved in the regulation of sulfur metabolite repression, probably by mediating the inactivation or degradation of the metR transcription factor. The sequence is that of Probable E3 ubiquitin ligase complex SCF subunit sconB (sconB) from Emericella nidulans (strain FGSC A4 / ATCC 38163 / CBS 112.46 / NRRL 194 / M139) (Aspergillus nidulans).